The sequence spans 426 residues: Diaminobutyrate--2-oxoglutarate transaminase (426 aa).

At Lys272 the chain carries N6-(pyridoxal phosphate)lysine.

This sequence belongs to the class-III pyridoxal-phosphate-dependent aminotransferase family. Pyridoxal 5'-phosphate serves as cofactor.

The catalysed reaction is L-2,4-diaminobutanoate + 2-oxoglutarate = L-aspartate 4-semialdehyde + L-glutamate. The protein operates within amine and polyamine biosynthesis; ectoine biosynthesis; L-ectoine from L-aspartate 4-semialdehyde: step 1/3. Functionally, catalyzes reversively the conversion of L-aspartate beta-semialdehyde (ASA) to L-2,4-diaminobutyrate (DABA) by transamination with L-glutamate. The sequence is that of Diaminobutyrate--2-oxoglutarate transaminase (ectB) from Sporosarcina pasteurii (Bacillus pasteurii).